The following is a 296-amino-acid chain: Urease accessory protein UreD (296 aa).

It belongs to the UreD family. UreD, UreF and UreG form a complex that acts as a GTP-hydrolysis-dependent molecular chaperone, activating the urease apoprotein by helping to assemble the nickel containing metallocenter of UreC. The UreE protein probably delivers the nickel.

It is found in the cytoplasm. In terms of biological role, required for maturation of urease via the functional incorporation of the urease nickel metallocenter. This chain is Urease accessory protein UreD, found in Synechococcus sp. (strain CC9311).